The chain runs to 121 residues: Large ribosomal subunit protein bL12 (121 aa).

This sequence belongs to the bacterial ribosomal protein bL12 family. In terms of assembly, homodimer. Part of the ribosomal stalk of the 50S ribosomal subunit. Forms a multimeric L10(L12)X complex, where L10 forms an elongated spine to which 2 to 4 L12 dimers bind in a sequential fashion. Binds GTP-bound translation factors.

Functionally, forms part of the ribosomal stalk which helps the ribosome interact with GTP-bound translation factors. Is thus essential for accurate translation. This Shigella sonnei (strain Ss046) protein is Large ribosomal subunit protein bL12.